A 129-amino-acid chain; its full sequence is M-zodatoxin-Lt8k (129 aa).

Positions 1 to 20 (MKYFVVALALVAAFACIAES) are cleaved as a signal peptide. Residues 21–60 (KPAESEHELAEVEEENELADLEDAVWLEHLADLSDLEEAR) constitute a propeptide that is removed on maturation.

It belongs to the cationic peptide 06 (cytoinsectotoxin) family. As to expression, expressed by the venom gland.

The protein resides in the secreted. In terms of biological role, insecticidal, cytolytic and antimicrobial peptide. Forms voltage-dependent, ion-permeable channels in membranes. At high concentration causes cell membrane lysis. This chain is M-zodatoxin-Lt8k (cit 1-10), found in Lachesana tarabaevi (Spider).